A 437-amino-acid polypeptide reads, in one-letter code: Epsilon-sarcoglycan (437 aa).

Topologically, residues 1 to 317 (MQLPRWWELG…LKSRDYYTDF (317 aa)) are extracellular. An N-linked (GlcNAc...) asparagine glycan is attached at N200. The chain crosses the membrane as a helical span at residues 318 to 338 (LITLAVPSAVALVLFLILAYI). Over 339 to 437 (MCCRREGVEK…QQQTTGKWYP (99 aa)) the chain is Cytoplasmic.

The protein belongs to the sarcoglycan alpha/epsilon family. Post-translationally, N-glycosylated. In terms of processing, ubiquitinated, leading to its degradation by the proteasome.

It is found in the cell membrane. The protein resides in the sarcolemma. The protein localises to the cytoplasm. It localises to the cytoskeleton. Its subcellular location is the cell projection. It is found in the dendrite. The protein resides in the golgi apparatus. In terms of biological role, component of the sarcoglycan complex, a subcomplex of the dystrophin-glycoprotein complex which forms a link between the F-actin cytoskeleton and the extracellular matrix. The chain is Epsilon-sarcoglycan from Macaca fascicularis (Crab-eating macaque).